The primary structure comprises 996 residues: Sarcoplasmic/endoplasmic reticulum calcium ATPase 1 (996 aa).

Residues 1 to 48 (MENAHTKSPAECLSYFGVNEHTGLSPDQFKKNLDKFGYNELPAEEGKS) lie on the Cytoplasmic side of the membrane. A helical membrane pass occupies residues 49 to 69 (IWDLIVEQFEDLLVRILLLAA). Residues 70–89 (CISFVLAWFEEGEETITAFV) lie on the Lumenal side of the membrane. A helical transmembrane segment spans residues 90–110 (EPFVILLILIANAIVGVWQER). At 111–253 (NAEDAIEALK…QEKTPLQAKL (143 aa)) the chain is on the cytoplasmic side. A helical membrane pass occupies residues 254-273 (DEFGEQLSKVISLICVAVWA). Over 274-295 (INIGHFNDPVHGGSWIRGAVYY) the chain is Lumenal. The chain crosses the membrane as a helical span at residues 296–313 (FKIAVALAVAAIPEGLPA). Residues valine 304, alanine 305, isoleucine 307, and glutamate 309 each contribute to the Ca(2+) site. The Cytoplasmic portion of the chain corresponds to 314–754 (VITTCLALGT…EEGRAIYNNM (441 aa)). Aspartate 351 serves as the catalytic 4-aspartylphosphate intermediate. Aspartate 351 and threonine 353 together coordinate Mg(2+). Positions 353, 442, 489, 512, 557, 622, 623, 624, 675, and 681 each coordinate ATP. Residue aspartate 700 coordinates Mg(2+). Position 703 (asparagine 703) interacts with ATP. The helical transmembrane segment at 755–774 (KQFIRYLISSNVGEVVCIFL) threads the bilayer. Ca(2+)-binding residues include asparagine 765 and glutamate 768. Topologically, residues 775-784 (TAALGLPEAL) are lumenal. The chain crosses the membrane as a helical span at residues 785-805 (IPVQLLWVNLVTDGLPATALG). Residues 785–805 (IPVQLLWVNLVTDGLPATALG) form an interaction with PLN region. Residues asparagine 793, threonine 796, and aspartate 797 each contribute to the Ca(2+) site. At 806–825 (FNPPDLDIMGKPPRSPKEPL) the chain is on the cytoplasmic side. Residues 826–848 (ISGWLFFRYMAIGGYVGAATVGG) traverse the membrane as a helical segment. Topologically, residues 849-894 (AAWWFLYDSTGPAVTYYQLSHFMQCHNHNEDFTGVDCDIFEASPPM) are lumenal. Residues cysteine 873 and cysteine 885 are joined by a disulfide bond. Residues 895 to 914 (TMALSVLVTIEMCNALNSLS) form a helical membrane-spanning segment. Ca(2+) is bound at residue glutamate 905. The Cytoplasmic portion of the chain corresponds to 915–927 (ENQSLIRMPPWSN). A helical transmembrane segment spans residues 928 to 946 (LWLMAAMTLSMSLHFMIIY). The interaction with PLN stretch occupies residues 929 to 940 (WLMAAMTLSMSL). The Lumenal portion of the chain corresponds to 947–961 (VDPLPMIFKLTHLTF). The chain crosses the membrane as a helical span at residues 962–982 (DQWLMVFKLSFPVILIDEVLK). Residues 983–996 (FFARNYIETGKEVK) lie on the Cytoplasmic side of the membrane.

This sequence belongs to the cation transport ATPase (P-type) (TC 3.A.3) family. Type IIA subfamily. As to quaternary structure, interacts with sarcolipin (SLN). Interacts with phospholamban (PLN). Interacts with myoregulin (MRLN). Interacts with DWORF. It depends on Mg(2+) as a cofactor.

The protein resides in the endoplasmic reticulum membrane. Its subcellular location is the sarcoplasmic reticulum membrane. The catalysed reaction is Ca(2+)(in) + ATP + H2O = Ca(2+)(out) + ADP + phosphate + H(+). With respect to regulation, inhibited by sarcolipin (SLN) and myoregulin (MRLN). Also shown to be inhibited by phospholamban (PLN) in vitro. Enhanced by DWORF; DWORF increases activity by displacing sarcolipin (SLN), phospholamban (PLN) and myoregulin (MRLN). In terms of biological role, key regulator of striated muscle performance by acting as the major Ca(2+) ATPase responsible for the reuptake of cytosolic Ca(2+) into the sarcoplasmic reticulum. Catalyzes the hydrolysis of ATP coupled with the translocation of calcium from the cytosol to the sarcoplasmic reticulum lumen. Contributes to calcium sequestration involved in muscular excitation/contraction. This Makaira nigricans (Atlantic blue marlin) protein is Sarcoplasmic/endoplasmic reticulum calcium ATPase 1 (atp2a1).